The sequence spans 516 residues: GMP synthase [glutamine-hydrolyzing] (516 aa).

The Glutamine amidotransferase type-1 domain occupies 7-199 (KIIILDFGSQ…VFGLCKCQAT (193 aa)). Cys84 acts as the Nucleophile in catalysis. Catalysis depends on residues His173 and Glu175. Residues 200–391 (WTMQGFIESN…LGLPDEAVHR (192 aa)) enclose the GMPS ATP-PPase domain. Position 227 to 233 (227 to 233 (SGGVDSS)) interacts with ATP.

In terms of assembly, homodimer.

It catalyses the reaction XMP + L-glutamine + ATP + H2O = GMP + L-glutamate + AMP + diphosphate + 2 H(+). It functions in the pathway purine metabolism; GMP biosynthesis; GMP from XMP (L-Gln route): step 1/1. Its function is as follows. Catalyzes the synthesis of GMP from XMP. This is GMP synthase [glutamine-hydrolyzing] from Desulfotalea psychrophila (strain LSv54 / DSM 12343).